Reading from the N-terminus, the 87-residue chain is DNA polymerase epsilon subunit C (87 aa).

In terms of assembly, DNA polymerase epsilon is a heterotetramer consisting of cdc20/Pol2, dpb2, dpb3, and dpb4. Also forms a heterodimer consisting dpb3 and dpb4. Interacts directly with cdc20/pol2 and dpb4.

The protein resides in the nucleus. In terms of biological role, as accessory component of the DNA polymerase epsilon (DNA polymerase II) participates in chromosomal DNA replication. It is required during synthesis of the leading and lagging DNA strands at the replication fork and binds at/or near replication origins and moves along DNA with the replication fork. It has 3'-5' proofreading exonuclease activity that correct errors arising during DNA replication. It is also involved in DNA synthesis during DNA repair. The dpb3-dpb4 dimer associates with histone deacetylases, chromatin remodelers, and histones and plays a crucial role in the inheritance of histone hypoacetylation and H3K9 methylation in heterochromatin. The dpb3-dpb4 dimer is also required for the recruitment of sir2 to heterochromatin. The chain is DNA polymerase epsilon subunit C from Schizosaccharomyces pombe (strain 972 / ATCC 24843) (Fission yeast).